The primary structure comprises 377 residues: UPF0754 membrane protein lin2327 (377 aa).

2 helical membrane-spanning segments follow: residues 1–21 (MSVL…GAMT) and 357–377 (YLGG…AMWI).

Belongs to the UPF0754 family.

It localises to the cell membrane. This chain is UPF0754 membrane protein lin2327, found in Listeria innocua serovar 6a (strain ATCC BAA-680 / CLIP 11262).